The sequence spans 175 residues: Crossover junction endodeoxyribonuclease RuvC (175 aa).

Catalysis depends on residues aspartate 12, glutamate 72, and aspartate 144. Positions 12, 72, and 144 each coordinate Mg(2+).

It belongs to the RuvC family. As to quaternary structure, homodimer which binds Holliday junction (HJ) DNA. The HJ becomes 2-fold symmetrical on binding to RuvC with unstacked arms; it has a different conformation from HJ DNA in complex with RuvA. In the full resolvosome a probable DNA-RuvA(4)-RuvB(12)-RuvC(2) complex forms which resolves the HJ. Requires Mg(2+) as cofactor.

It localises to the cytoplasm. It catalyses the reaction Endonucleolytic cleavage at a junction such as a reciprocal single-stranded crossover between two homologous DNA duplexes (Holliday junction).. In terms of biological role, the RuvA-RuvB-RuvC complex processes Holliday junction (HJ) DNA during genetic recombination and DNA repair. Endonuclease that resolves HJ intermediates. Cleaves cruciform DNA by making single-stranded nicks across the HJ at symmetrical positions within the homologous arms, yielding a 5'-phosphate and a 3'-hydroxyl group; requires a central core of homology in the junction. The consensus cleavage sequence is 5'-(A/T)TT(C/G)-3'. Cleavage occurs on the 3'-side of the TT dinucleotide at the point of strand exchange. HJ branch migration catalyzed by RuvA-RuvB allows RuvC to scan DNA until it finds its consensus sequence, where it cleaves and resolves the cruciform DNA. The chain is Crossover junction endodeoxyribonuclease RuvC from Beijerinckia indica subsp. indica (strain ATCC 9039 / DSM 1715 / NCIMB 8712).